The sequence spans 42 residues: Statherin (42 aa).

Residues 1-6 (DSSEEK) are hydroxyapatite-binding; inhibits crystal growth. Serine 2 and serine 3 each carry phosphoserine. The disordered stretch occupies residues 18-42 (RYGPYQPFVPPPLYPQPYQPYQPQY). A hydrophobic; inhibits precipitation of calcium phosphate salts region spans residues 18-42 (RYGPYQPFVPPPLYPQPYQPYQPQY). Residues 24–42 (PFVPPPLYPQPYQPYQPQY) are compositionally biased toward pro residues.

The protein belongs to the histatin/statherin family. Secreted by parotid and submandibular glands.

The protein localises to the secreted. In terms of biological role, salivary protein that stabilizes saliva supersaturated with calcium salts by inhibiting the precipitation of calcium phosphate salts. It also modulates hydroxyapatite crystal formation on the tooth surface. In Macaca arctoides (Stump-tailed macaque), this protein is Statherin (STATH).